We begin with the raw amino-acid sequence, 118 residues long: uncharacterized protein (118 aa).

2 helical membrane passes run 5–25 and 40–57; these read AFFN…SMVI and FLTF…QHYI.

The protein resides in the membrane. This is an uncharacterized protein from African swine fever virus (strain Badajoz 1971 Vero-adapted) (Ba71V).